The sequence spans 212 residues: Adenylate kinase (212 aa).

10 to 15 (GAGKGT) contacts ATP. The segment at 30-59 (AIGDIFRAIIKTSSKDAEVINSYVEQGKLI) is NMP. AMP is bound by residues Arg36, 57–59 (KLI), 85–88 (GYPR), and Gln92. The interval 122–160 (GRYSCKSCGKIYNDYFLKPRIDKICDVCKSSVFEYRKDD) is LID. Arg123 contacts ATP. 2 residues coordinate Zn(2+): Cys126 and Cys129. 132-133 (IY) provides a ligand contact to ATP. The Zn(2+) site is built by Cys146 and Cys149. 2 residues coordinate AMP: Arg157 and Arg168. ATP is bound at residue Lys196.

This sequence belongs to the adenylate kinase family. As to quaternary structure, monomer.

It localises to the cytoplasm. It carries out the reaction AMP + ATP = 2 ADP. Its pathway is purine metabolism; AMP biosynthesis via salvage pathway; AMP from ADP: step 1/1. Catalyzes the reversible transfer of the terminal phosphate group between ATP and AMP. Plays an important role in cellular energy homeostasis and in adenine nucleotide metabolism. The protein is Adenylate kinase of Rickettsia bellii (strain RML369-C).